The primary structure comprises 158 residues: Small ribosomal subunit protein uS9 (158 aa).

The protein belongs to the universal ribosomal protein uS9 family.

The chain is Small ribosomal subunit protein uS9 from Brucella melitensis biotype 2 (strain ATCC 23457).